The chain runs to 123 residues: Small ribosomal subunit protein uS12 (123 aa).

The residue at position 89 (D89) is a 3-methylthioaspartic acid.

It belongs to the universal ribosomal protein uS12 family. As to quaternary structure, part of the 30S ribosomal subunit. Contacts proteins S8 and S17. May interact with IF1 in the 30S initiation complex.

In terms of biological role, with S4 and S5 plays an important role in translational accuracy. Its function is as follows. Interacts with and stabilizes bases of the 16S rRNA that are involved in tRNA selection in the A site and with the mRNA backbone. Located at the interface of the 30S and 50S subunits, it traverses the body of the 30S subunit contacting proteins on the other side and probably holding the rRNA structure together. The combined cluster of proteins S8, S12 and S17 appears to hold together the shoulder and platform of the 30S subunit. The chain is Small ribosomal subunit protein uS12 from Afipia carboxidovorans (strain ATCC 49405 / DSM 1227 / KCTC 32145 / OM5) (Oligotropha carboxidovorans).